The sequence spans 157 residues: UPF0251 protein CLJ_B1488 (157 aa).

This sequence belongs to the UPF0251 family.

The sequence is that of UPF0251 protein CLJ_B1488 from Clostridium botulinum (strain 657 / Type Ba4).